The following is a 125-amino-acid chain: RutC family protein STK_08110 (125 aa).

The protein belongs to the RutC family.

This chain is RutC family protein STK_08110, found in Sulfurisphaera tokodaii (strain DSM 16993 / JCM 10545 / NBRC 100140 / 7) (Sulfolobus tokodaii).